The following is a 189-amino-acid chain: Nucleoside triphosphate pyrophosphatase (189 aa).

The active-site Proton acceptor is the aspartate 70.

It belongs to the Maf family. Requires a divalent metal cation as cofactor.

It is found in the cytoplasm. The enzyme catalyses a ribonucleoside 5'-triphosphate + H2O = a ribonucleoside 5'-phosphate + diphosphate + H(+). The catalysed reaction is a 2'-deoxyribonucleoside 5'-triphosphate + H2O = a 2'-deoxyribonucleoside 5'-phosphate + diphosphate + H(+). Its function is as follows. Nucleoside triphosphate pyrophosphatase. May have a dual role in cell division arrest and in preventing the incorporation of modified nucleotides into cellular nucleic acids. The protein is Nucleoside triphosphate pyrophosphatase of Xylella fastidiosa (strain M23).